Reading from the N-terminus, the 60-residue chain is Large ribosomal subunit protein uL30 (60 aa).

Belongs to the universal ribosomal protein uL30 family. Part of the 50S ribosomal subunit.

The sequence is that of Large ribosomal subunit protein uL30 from Syntrophobacter fumaroxidans (strain DSM 10017 / MPOB).